The chain runs to 200 residues: Rho GDP-dissociation inhibitor 2 (200 aa).

Positions methionine 1–lysine 39 are disordered. An N-acetylthreonine modification is found at threonine 2. Residue lysine 20 is modified to N6-acetyllysine. Tyrosine 23 is subject to Phosphotyrosine. Lysine 24, lysine 39, lysine 46, lysine 101, and lysine 123 each carry N6-acetyllysine. Basic and acidic residues predominate over residues serine 30–lysine 39. Phosphoserine is present on serine 144. An N6-acetyllysine modification is found at lysine 174.

It belongs to the Rho GDI family. In terms of assembly, interacts with RHOA. Interacts with RAC1. Interacts with RAC2. Interacts with CDC42. Preferentially expressed in hematopoietic cells.

The protein localises to the cytoplasm. It is found in the cytosol. In terms of biological role, regulates the GDP/GTP exchange reaction of the Rho proteins by inhibiting the dissociation of GDP from them, and the subsequent binding of GTP to them. Regulates reorganization of the actin cytoskeleton mediated by Rho family members. The chain is Rho GDP-dissociation inhibitor 2 (Arhgdib) from Mus musculus (Mouse).